A 1623-amino-acid chain; its full sequence is RING finger protein 17 (1623 aa).

A disordered region spans residues 1–22 (MAAEASKTGPSRSSYQRMGRKS). Residues 32–75 (CTRCGRRVSRSSGHHCELQCGHAFCELCLLMTEECTTIICPDCE) form an RING-type zinc finger. Lys-234 is subject to N6-acetyllysine. Tudor domains are found at residues 726–784 (CPVQ…FLNA), 962–1021 (KWEN…LKTM), and 1228–1285 (FWKK…PDIP). Residues 1438 to 1462 (NQSNQHSDTDDSGVSGESESESLDE) form a disordered region. The Tudor 4 domain occupies 1479 to 1539 (DFRTEMPCLA…CQIPSHLMRY (61 aa)).

Interacts with MXD1, MXD3, MXD4, MXI1 and PIWIL1. Self-associates. In terms of tissue distribution, testis specific.

It localises to the cytoplasm. It is found in the nucleus. Seems to be involved in regulation of transcriptional activity of MYC. In vitro, inhibits DNA-binding activity of Mad-MAX heterodimers. Can recruit Mad transcriptional repressors (MXD1, MXD3, MXD4 and MXI1) to the cytoplasm. May be involved in spermiogenesis. This Homo sapiens (Human) protein is RING finger protein 17 (RNF17).